The chain runs to 431 residues: MRSYEKSKAAFEEAQRVMPGGVNSPVRAFKSVNMDPIFMERGKGSKIYDIDGNEYIDYVLSWGPLILGHSNEKVVKEIQKAAEHGTSFGAPTELETELAELVIDRVPSIEIVRMVSSGTEATMSALRLARGYTGRNKIVKFEGCYHGHGDSLLIKAGSGVATLGLPDSPGVPESIAKNTITVPYNDLESMKLVFQEFGDDIAGVIVEPVAGNMGVVPPVKGFLEGLRELTETHGALLIFDEVMTGFRVDYNCAQGYFGVTPDLTCLGKVIGGGLPVGAYGGKAEIMEKIAPSGPIYQAGTLSGNPLAMTAGLETLKQLTPESYREFSRKADRLEKGISEAAEKNGIPCTFNRAGSMIGFFFTNGPVINYDTAKQSDLGLFAEYYKGMADEGVFLPPSQFEGLFLSTAHTDDDIEHTIKAAERVFERISRSR.

N6-(pyridoxal phosphate)lysine is present on K268.

Belongs to the class-III pyridoxal-phosphate-dependent aminotransferase family. HemL subfamily. In terms of assembly, homodimer. Requires pyridoxal 5'-phosphate as cofactor.

The protein localises to the cytoplasm. It catalyses the reaction (S)-4-amino-5-oxopentanoate = 5-aminolevulinate. Its pathway is porphyrin-containing compound metabolism; protoporphyrin-IX biosynthesis; 5-aminolevulinate from L-glutamyl-tRNA(Glu): step 2/2. This Bacillus licheniformis (strain ATCC 14580 / DSM 13 / JCM 2505 / CCUG 7422 / NBRC 12200 / NCIMB 9375 / NCTC 10341 / NRRL NRS-1264 / Gibson 46) protein is Glutamate-1-semialdehyde 2,1-aminomutase 2.